We begin with the raw amino-acid sequence, 353 residues long: N6-methyladenosine RNA demethylase ALKB1 (353 aa).

A Fe2OG dioxygenase domain is found at 223–352 (IAQAAIVNFY…RINLNVRQMR (130 aa)). Fe cation is bound by residues His241, Asp243, and His308. Arg343 is a binding site for 2-oxoglutarate.

The protein belongs to the alkB family. Fe(2+) is required as a cofactor.

It is found in the cytoplasm. The protein localises to the P-body. The catalysed reaction is an N(6)-methyladenosine in mRNA + 2-oxoglutarate + O2 = an adenosine in mRNA + formaldehyde + succinate + CO2. Functionally, RNA demethylase that regulates the stability of mRNAs through an m(6)A-dependent manner. M6A is a modification present at internal sites of mRNAs and some non-coding RNAs and plays a role in mRNA stability and processing. Plays a role in pathogenicity towards plant host. In Pyricularia oryzae (strain 70-15 / ATCC MYA-4617 / FGSC 8958) (Rice blast fungus), this protein is N6-methyladenosine RNA demethylase ALKB1.